The following is a 189-amino-acid chain: UPF0301 protein PA14_05290 (189 aa).

Belongs to the UPF0301 (AlgH) family.

The protein is UPF0301 protein PA14_05290 of Pseudomonas aeruginosa (strain UCBPP-PA14).